Reading from the N-terminus, the 143-residue chain is Small ribosomal subunit protein uS12 (143 aa).

The span at 1–19 shows a compositional bias: basic residues; it reads MGKPRGIRTARKHVNHRRE. Residues 1 to 21 are disordered; the sequence is MGKPRGIRTARKHVNHRREQR. Residue proline 62 is modified to Hydroxyproline.

It belongs to the universal ribosomal protein uS12 family. As to quaternary structure, component of the 40S small ribosomal subunit.

It is found in the cytoplasm. The protein resides in the cytosol. Its subcellular location is the rough endoplasmic reticulum. This Papilio dardanus (African swallowtail butterfly) protein is Small ribosomal subunit protein uS12 (RpS23).